The following is a 184-amino-acid chain: NADH-quinone oxidoreductase subunit B (184 aa).

[4Fe-4S] cluster contacts are provided by Cys37, Cys38, Cys103, and Cys132.

The protein belongs to the complex I 20 kDa subunit family. NDH-1 is composed of 14 different subunits. Subunits NuoB, C, D, E, F, and G constitute the peripheral sector of the complex. It depends on [4Fe-4S] cluster as a cofactor.

It is found in the cell membrane. The catalysed reaction is a quinone + NADH + 5 H(+)(in) = a quinol + NAD(+) + 4 H(+)(out). Its function is as follows. NDH-1 shuttles electrons from NADH, via FMN and iron-sulfur (Fe-S) centers, to quinones in the respiratory chain. The immediate electron acceptor for the enzyme in this species is believed to be a menaquinone. Couples the redox reaction to proton translocation (for every two electrons transferred, four hydrogen ions are translocated across the cytoplasmic membrane), and thus conserves the redox energy in a proton gradient. The protein is NADH-quinone oxidoreductase subunit B of Mycobacterium bovis (strain BCG / Pasteur 1173P2).